The chain runs to 99 residues: Nucleoid-associated protein EbfC (99 aa).

Belongs to the YbaB/EbfC family. Homodimer.

It is found in the cytoplasm. It localises to the nucleoid. Functionally, binds to DNA and alters its conformation. May be involved in regulation of gene expression, nucleoid organization and DNA protection. In Borrelia hermsii (strain HS1 / DAH), this protein is Nucleoid-associated protein EbfC.